Here is a 267-residue protein sequence, read N- to C-terminus: MVKISFQPAVAGVKGDKADKASASAPAPASATEILLTPAREEQPPQHRSKRGGSVGGVCYLSMGMVVLLMGLVFASVYIYRYFFLAQLARDNFFRCGVLYEDSLSSQVRTQMELEEDVKIYLDENYERINVPVPQFGGGDPADIIHDFQRGLTAYHDISLDKCYVIELNTTIVLPPRNFWELLMNVKRGTYLPQTYIIQEEMVDTEHVSDKEALGSFIYHLCNGKDTYRLRRRATRRRINKRGAKNCNAIRHFENTFVVETLICGVV.

T37 carries the phosphothreonine modification. Residues 55–75 (VGGVCYLSMGMVVLLMGLVFA) traverse the membrane as a helical; Signal-anchor for type II membrane protein segment. Residues 136 to 230 (FGGGDPADII…LCNGKDTYRL (95 aa)) form the BRICHOS domain. C163 and C222 are oxidised to a cystine. N169 carries N-linked (GlcNAc...) asparagine glycosylation.

It belongs to the ITM2 family. As to quaternary structure, interacts with BACE1. Interacts with APP. Interacts with STMN2. In terms of processing, type I membrane-bound, as well as soluble, furin has a pre-eminent role in ITM2C proteolytic processing. PCSK7 and PCSK5 may also be involved although to a lesser extent. The soluble form of PCSK7 is incapable of processing ITM2C. Fails to undergo shedding by ADAM10 and intramembrane cleavage by SPPL2B.

The protein localises to the lysosome membrane. The protein resides in the cell membrane. In terms of biological role, negative regulator of amyloid-beta peptide production. May inhibit the processing of APP by blocking its access to alpha- and beta-secretase. Binding to the beta-secretase-cleaved APP C-terminal fragment is negligible, suggesting that ITM2C is a poor gamma-secretase cleavage inhibitor. May play a role in TNF-induced cell death and neuronal differentiation. In Macaca fascicularis (Crab-eating macaque), this protein is Integral membrane protein 2C (ITM2C).